The chain runs to 235 residues: Bypass of stop codon protein 2 (235 aa).

Residues 68-88 (FGIFQLMCSLGVIVLLLPIII) form a helical membrane-spanning segment. Position 177 is a phosphoserine (Ser-177).

It is found in the lipid droplet. It localises to the membrane. This Saccharomyces cerevisiae (strain ATCC 204508 / S288c) (Baker's yeast) protein is Bypass of stop codon protein 2 (BSC2).